Reading from the N-terminus, the 257-residue chain is uncharacterized protein (257 aa).

N-linked (GlcNAc...) asparagine; by host glycans are attached at residues asparagine 61, asparagine 95, asparagine 102, asparagine 111, asparagine 139, asparagine 148, and asparagine 152. A helical membrane pass occupies residues 233–253 (WYIIGGIFWVIVLIILVIFII).

The protein localises to the host membrane. It is found in the virion. This is an uncharacterized protein from Acanthamoeba polyphaga (Amoeba).